The primary structure comprises 207 residues: Ras-related protein Rab-8A (207 aa).

Ser17, Gly18, Val19, Gly20, Lys21, Thr22, Cys23, Ser39, and Thr40 together coordinate GTP. Thr22 lines the Mg(2+) pocket. 2 consecutive short sequence motifs (switch) follow at residues 31-45 (DAFN…GIDF) and 63-80 (DTAG…YYRG). Residues Thr40 and Asp63 each coordinate Mg(2+). GTP-binding residues include Gly66, Asn121, Lys122, Asp124, Ala152, and Lys153. Cys204 is subject to Cysteine methyl ester. The S-geranylgeranyl cysteine moiety is linked to residue Cys204. The propeptide at 205–207 (VLL) is removed in mature form.

It belongs to the small GTPase superfamily. Rab family. Requires Mg(2+) as cofactor.

Its subcellular location is the cell membrane. The protein resides in the golgi apparatus. It localises to the endosome membrane. It is found in the recycling endosome membrane. The protein localises to the cell projection. Its subcellular location is the cilium. The protein resides in the cytoplasmic vesicle. It localises to the phagosome membrane. It is found in the cytoplasm. The protein localises to the cytoskeleton. Its subcellular location is the microtubule organizing center. The protein resides in the centrosome. It localises to the centriole. It is found in the cilium basal body. The protein localises to the midbody. It carries out the reaction GTP + H2O = GDP + phosphate + H(+). Regulated by guanine nucleotide exchange factors (GEFs) which promote the exchange of bound GDP for free GTP, GTPase activating proteins (GAPs) which increase the GTP hydrolysis activity, and GDP dissociation inhibitors (GDIs) which inhibit the dissociation of the nucleotide from the GTPase. Activated in response to insulin. Its function is as follows. The small GTPases Rab are key regulators of intracellular membrane trafficking, from the formation of transport vesicles to their fusion with membranes. Rabs cycle between an inactive GDP-bound form and an active GTP-bound form that is able to recruit to membranes different sets of downstream effectors directly responsible for vesicle formation, movement, tethering and fusion. RAB8A is involved in polarized vesicular trafficking and neurotransmitter release. Together with RAB11A, RAB3IP, the exocyst complex, PARD3, PRKCI, ANXA2, CDC42 and DNMBP promotes transcytosis of PODXL to the apical membrane initiation sites (AMIS), apical surface formation and lumenogenesis. Regulates the compacted morphology of the Golgi. Together with MYO5B and RAB11A participates in epithelial cell polarization. Also involved in membrane trafficking to the cilium and ciliogenesis. Together with MICALL2, may also regulate adherens junction assembly. May play a role in insulin-induced transport to the plasma membrane of the glucose transporter GLUT4 and therefore play a role in glucose homeostasis. Involved in autophagy. Participates in the export of a subset of neosynthesized proteins through a Rab8-Rab10-Rab11-dependent endososomal export route. Targeted to and stabilized on stressed lysosomes through LRRK2 phosphorylation. Suppresses stress-induced lysosomal enlargement through EHBP1 and EHNP1L1 effector proteins. The polypeptide is Ras-related protein Rab-8A (RAB8A) (Gallus gallus (Chicken)).